A 1079-amino-acid polypeptide reads, in one-letter code: Ubiquitin carboxyl-terminal hydrolase 26 (1079 aa).

The segment covering 1–12 (MSRPNTRNKSKR) has biased composition (basic residues). The interval 1–21 (MSRPNTRNKSKRPRADDCESP) is disordered. The region spanning 106-446 (AGLTNLGATC…DAYMLMYKRI (341 aa)) is the USP domain. C115 acts as the Nucleophile in catalysis. H359 acts as the Proton acceptor in catalysis. The disordered stretch occupies residues 384–419 (GLHPFGEKPGKSSDKTDQKPQGSSTADSVTNDDNNS). Basic and acidic residues predominate over residues 388 to 401 (FGEKPGKSSDKTDQ). The span at 402–417 (KPQGSSTADSVTNDDN) shows a compositional bias: polar residues. 3 consecutive DUSP domains span residues 495-598 (AYIT…DDFC), 613-715 (DVYR…FPSD), and 738-862 (AVKL…AEIV). Positions 948–972 (EASAAVPVPDRRTSKRSRRTTSGNS) are disordered. The Ubiquitin-like domain maps to 961 to 1037 (SKRSRRTTSG…LWVKDSEIYE (77 aa)).

It belongs to the peptidase C19 family.

It localises to the nucleus. The catalysed reaction is Thiol-dependent hydrolysis of ester, thioester, amide, peptide and isopeptide bonds formed by the C-terminal Gly of ubiquitin (a 76-residue protein attached to proteins as an intracellular targeting signal).. Recognizes and hydrolyzes the peptide bond at the C-terminal Gly of ubiquitin. Involved in the processing of poly-ubiquitin precursors as well as that of ubiquitinated proteins. Deubiquitinates H2BK143ub1 of histone H2B. The protein is Ubiquitin carboxyl-terminal hydrolase 26 (UBP26) of Oryza sativa subsp. japonica (Rice).